The chain runs to 424 residues: CUGBP Elav-like family member 4 (424 aa).

The tract at residues 8 to 27 (VANGQPDNSSLSSNPTGHMN) is disordered. Residues 9 to 24 (ANGQPDNSSLSSNPTG) are compositionally biased toward polar residues. 2 consecutive RRM domains span residues 47–128 (IKLF…PADS) and 342–417 (PQPP…LKRP).

Belongs to the CELF/BRUNOL family.

The protein localises to the nucleus. It localises to the cytoplasm. In terms of biological role, RNA-binding protein that may be implicated in the regulation of pre-mRNA alternative splicing. In Xenopus tropicalis (Western clawed frog), this protein is CUGBP Elav-like family member 4 (celf4).